Consider the following 205-residue polypeptide: Ypt/Rab-type GTPase avaA (205 aa).

GTP-binding positions include 17–23 (SGVGKTS), 33–40 (FSGSYKAT), glycine 66, 125–128 (NKID), and 157–159 (SAK). The Effector region signature appears at 37-45 (YKATIGADF). Residues cysteine 203 and cysteine 205 are each lipidated (S-geranylgeranyl cysteine). Position 205 is a cysteine methyl ester (cysteine 205).

Belongs to the small GTPase superfamily. Rab family.

With respect to regulation, rab activation is generally mediated by a guanine exchange factor (GEF), while inactivation through hydrolysis of bound GTP is catalyzed by a GTPase activating protein (GAP). Its function is as follows. Ypt/Rab-type GTPases are key regulators of membrane trafficking and intracellular vesicular transport. They act as molecular switches that convert between GTP-bound and GDP-bound states, and regulate virtually all steps of membrane traffic from the formation of the transport vesicle at the donor membrane to its fusion at the target membrane. In the GDP-bound state, Ypt proteins are predominantly cytosolic, solubilized through the interaction with a GDP dissociation inhibitor (GDI). In the GTP-bound state, the proteins are membrane bound and interact with specific effector proteins that select cargo, promote vesicle movement, or verify the correct site of fusion. AvaA functions in vacuolar biogenesis. The chain is Ypt/Rab-type GTPase avaA from Emericella nidulans (strain FGSC A4 / ATCC 38163 / CBS 112.46 / NRRL 194 / M139) (Aspergillus nidulans).